We begin with the raw amino-acid sequence, 233 residues long: Purine nucleoside phosphorylase DeoD-type (233 aa).

Histidine 4 contributes to the a purine D-ribonucleoside binding site. Residues glycine 20, arginine 24, arginine 43, and 87-90 (RVGS) each bind phosphate. A purine D-ribonucleoside contacts are provided by residues 178–180 (EME) and 202–203 (SD). Aspartate 203 acts as the Proton donor in catalysis.

It belongs to the PNP/UDP phosphorylase family. As to quaternary structure, homohexamer; trimer of homodimers.

It catalyses the reaction a purine D-ribonucleoside + phosphate = a purine nucleobase + alpha-D-ribose 1-phosphate. It carries out the reaction a purine 2'-deoxy-D-ribonucleoside + phosphate = a purine nucleobase + 2-deoxy-alpha-D-ribose 1-phosphate. Its function is as follows. Catalyzes the reversible phosphorolytic breakdown of the N-glycosidic bond in the beta-(deoxy)ribonucleoside molecules, with the formation of the corresponding free purine bases and pentose-1-phosphate. The sequence is that of Purine nucleoside phosphorylase DeoD-type from Bacillus subtilis (strain 168).